The chain runs to 868 residues: Leucine--tRNA ligase (868 aa).

The short motif at 42-52 (PYPSGKLHMGH) is the 'HIGH' region element. A 'KMSKS' region motif is present at residues 627–631 (KMAKS). Lys630 contributes to the ATP binding site.

The protein belongs to the class-I aminoacyl-tRNA synthetase family.

The protein resides in the cytoplasm. The enzyme catalyses tRNA(Leu) + L-leucine + ATP = L-leucyl-tRNA(Leu) + AMP + diphosphate. This chain is Leucine--tRNA ligase, found in Pseudomonas fluorescens (strain Pf0-1).